The chain runs to 425 residues: Sucrose-phosphatase 2 (425 aa).

Belongs to the sucrose phosphatase family. As to quaternary structure, homodimer. Requires Mg(2+) as cofactor.

It carries out the reaction sucrose 6(F)-phosphate + H2O = sucrose + phosphate. It functions in the pathway glycan biosynthesis; sucrose biosynthesis; sucrose from D-fructose 6-phosphate and UDP-alpha-D-glucose: step 2/2. With respect to regulation, inhibited by EDTA. In terms of biological role, catalyzes the final step of sucrose synthesis. The chain is Sucrose-phosphatase 2 (SPP2) from Nicotiana tabacum (Common tobacco).